We begin with the raw amino-acid sequence, 425 residues long: Monoacylglycerol lipase ABHD2 (425 aa).

At 1–9 (MNAMLETPE) the chain is on the cytoplasmic side. A helical; Signal-anchor for type II membrane protein membrane pass occupies residues 10-30 (LPAVFDGVKLAAVAAVLYVIV). The Extracellular portion of the chain corresponds to 31–425 (RCLNLKSPTA…DTEQMEAELE (395 aa)). The AB hydrolase-1 domain occupies 128–382 (MVICPGIANH…HGGHLGFFEG (255 aa)). A glycan (N-linked (GlcNAc...) asparagine) is linked at Asn136. The active-site Nucleophile is the Ser207. Residues Asp345 and His376 each act as charge relay system in the active site. Residue Asn410 is glycosylated (N-linked (GlcNAc...) asparagine).

Belongs to the AB hydrolase superfamily. AB hydrolase 4 family. As to expression, widely expressed with higher expression in testis. Expressed by vascular smooth muscle cells, non vascular smooth muscle cells and heart.

It is found in the cell membrane. The protein localises to the cytoplasmic vesicle. Its subcellular location is the secretory vesicle. The protein resides in the acrosome membrane. The catalysed reaction is Hydrolyzes glycerol monoesters of long-chain fatty acids.. It carries out the reaction an acetyl ester + H2O = an aliphatic alcohol + acetate + H(+). It catalyses the reaction a triacylglycerol + H2O = a diacylglycerol + a fatty acid + H(+). The enzyme catalyses 2-(5Z,8Z,11Z,14Z-eicosatetraenoyl)-glycerol + H2O = glycerol + (5Z,8Z,11Z,14Z)-eicosatetraenoate + H(+). The catalysed reaction is a butanoate ester + H2O = an aliphatic alcohol + butanoate + H(+). It carries out the reaction hexadecanoate ester + H2O = an aliphatic alcohol + hexadecanoate + H(+). Its activity is regulated as follows. Acylglycerol lipase activity is activated upon binding to progesterone. Its function is as follows. Progesterone-dependent acylglycerol lipase that catalyzes hydrolysis of endocannabinoid arachidonoylglycerol (AG) from cell membrane. Acts as a progesterone receptor: progesterone-binding activates the acylglycerol lipase activity, mediating degradation of 1-arachidonoylglycerol (1AG) and 2-arachidonoylglycerol (2AG) to glycerol and arachidonic acid (AA). Also displays an ester hydrolase activity against acetyl ester, butanoate ester and hexadecanoate ester. Plays a key role in sperm capacitation in response to progesterone by mediating degradation of 2AG, an inhibitor of the sperm calcium channel CatSper, leading to calcium influx via CatSper and sperm activation. Involved in acrosomal reaction. May also play a role in smooth muscle cells migration. The sequence is that of Monoacylglycerol lipase ABHD2 (Abhd2) from Mus musculus (Mouse).